The following is a 155-amino-acid chain: 6,7-dimethyl-8-ribityllumazine synthase (155 aa).

Residues Phe24, 58–60, and 82–84 each bind 5-amino-6-(D-ribitylamino)uracil; these read AFE and AVI. 87–88 is a (2S)-2-hydroxy-3-oxobutyl phosphate binding site; sequence ST. Catalysis depends on His90, which acts as the Proton donor. Position 115 (Phe115) interacts with 5-amino-6-(D-ribitylamino)uracil. Arg129 contacts (2S)-2-hydroxy-3-oxobutyl phosphate.

It belongs to the DMRL synthase family.

It carries out the reaction (2S)-2-hydroxy-3-oxobutyl phosphate + 5-amino-6-(D-ribitylamino)uracil = 6,7-dimethyl-8-(1-D-ribityl)lumazine + phosphate + 2 H2O + H(+). It participates in cofactor biosynthesis; riboflavin biosynthesis; riboflavin from 2-hydroxy-3-oxobutyl phosphate and 5-amino-6-(D-ribitylamino)uracil: step 1/2. Its function is as follows. Catalyzes the formation of 6,7-dimethyl-8-ribityllumazine by condensation of 5-amino-6-(D-ribitylamino)uracil with 3,4-dihydroxy-2-butanone 4-phosphate. This is the penultimate step in the biosynthesis of riboflavin. This chain is 6,7-dimethyl-8-ribityllumazine synthase, found in Acetivibrio thermocellus (strain ATCC 27405 / DSM 1237 / JCM 9322 / NBRC 103400 / NCIMB 10682 / NRRL B-4536 / VPI 7372) (Clostridium thermocellum).